Reading from the N-terminus, the 732-residue chain is Sesterbrasiliatriene synthase PbSS (732 aa).

Residues 1 to 342 (MDFLSGAFHY…SRYHRDDLIT (342 aa)) are terpene cyclase. Mg(2+)-binding residues include Asp-105 and Asp-109. Substrate-binding positions include Asp-105, Asp-109, 193-196 (RLSE), 242-246 (FNKEF), and 334-335 (RY). Positions 105–109 (DDVTD) match the DDXXD 1 motif. Residues 238 to 246 (DYYSFNKEF) carry the NSE/DTE motif. The tract at residues 343-732 (TAGDRAMIVG…ARILLLGLGL (390 aa)) is prenyltransferase. Disordered regions lie at residues 371-390 (KSAT…WSDS) and 398-420 (ACYT…HKAN). The span at 411 to 420 (NGTEAGHKAN) shows a compositional bias: basic and acidic residues. Isopentenyl diphosphate contacts are provided by Lys-453, Arg-456, and His-485. Mg(2+)-binding residues include Asp-492 and Asp-496. The short motif at 492 to 496 (DDIED) is the DDXXD 2 element. Arg-501 is a binding site for dimethylallyl diphosphate. Residue Arg-502 coordinates isopentenyl diphosphate. Dimethylallyl diphosphate is bound by residues Lys-579, Thr-580, Gln-615, Asn-622, Lys-632, and Lys-642.

It in the N-terminal section; belongs to the terpene synthase family. This sequence in the C-terminal section; belongs to the FPP/GGPP synthase family. Hexamer. Mg(2+) is required as a cofactor.

It catalyses the reaction isopentenyl diphosphate + (2E,6E)-farnesyl diphosphate = (2E,6E,10E)-geranylgeranyl diphosphate + diphosphate. The catalysed reaction is isopentenyl diphosphate + (2E,6E,10E)-geranylgeranyl diphosphate = (2E,6E,10E,14E)-geranylfarnesyl diphosphate + diphosphate. It functions in the pathway secondary metabolite biosynthesis; terpenoid biosynthesis. Functionally, bifunctional sesterterpene synthase that possesses both prenyl transferase and terpene cyclase activity, converting isopentenyl diphosphate and dimethylallyl diphosphate into geranylfarnesyl diphosphate (GFPP) and further converting GFPP into sesterbrasiliatriene. This Penicillium brasilianum protein is Sesterbrasiliatriene synthase PbSS (PbSS).